The sequence spans 379 residues: Putative FBD-associated F-box protein At5g38570 (379 aa).

In terms of domain architecture, F-box spans 1–47; the sequence is MDNINGLPDDLLVKILSFVPTYVAVSTCVLSKRWEFLWMWLPNLEFV. An FBD domain is found at 295-345; sequence CWNQPSSVLECLLSSLKILNWSAYFGRPQDRDIAVYILKNACHLKTATFLT.

In Arabidopsis thaliana (Mouse-ear cress), this protein is Putative FBD-associated F-box protein At5g38570.